A 324-amino-acid chain; its full sequence is Esterase FPSE_08126 (324 aa).

Catalysis depends on residues Ser-156, Asp-255, and His-285.

Belongs to the AB hydrolase 3 family.

Esterase; part of the Fusarium detoxification of benzoxazolinone cluster involved in the degradation of benzoxazolinones produced by the host plant. Maize, wheat, and rye produce the 2 benzoxazinone phytoanticipins 2,4-dihy-droxy-7-methoxy-1,4-benzoxazin-3-one (DIMBOA) and 2,4-dihydroxy-1,4-benzoxazin-3-one (DIBOA) that, due to their inherent instability once released, spontaneously degrade to the more stable corresponding benzoxazolinones, 6-methoxy-2-benzoxazolinone (MBOA) and 2-benzoxazolinone (BOA), respectively. The first step in the detoxification of benzoxazolinones involves the hydrolysis of the cyclic ester bond of benzoxazolinones by the gamma-lactamase FDB1 to aminophenols. FDB1 is able to convert 2-benzoxazolinone (BOA) into 2-aminophenol (2-AP), as well as 6-methoxy-2-benzoxazolinone (MBOA) into 5-methoxy-2-aminophenol (2-AMP). The N-malonyltransferase FDB2 then metabolizes aminophenols via N-malonylation to non-toxic malonamic acids. FDB2 converts 2-AP into N-(2-hydroxyphenyl) malonamic acid (HPMA) and 2-AMP into N-(2-hydroxy-4-methoxyphenyl) malonamic acid (HMPMA). The cluster also contains 2 transcription factors (FDB3 and FPSE_08121), an aldo-keto reductase (FPSE_08125) that possibly associates with a ketone component of BOA and MBOA degradation, an esterase (FPSE_08126), an acyl-CoA transferase (FPSE_08120), a solute carrier protein (FPSE_08119) and a transmembrane transporter (FPSE_08127) proposed to shuttle metabolites of benzoxazolinone degradation. The polypeptide is Esterase FPSE_08126 (Fusarium pseudograminearum (strain CS3096) (Wheat and barley crown-rot fungus)).